A 421-amino-acid chain; its full sequence is Serine--tRNA ligase (421 aa).

225-227 (TAE) is a binding site for L-serine. ATP-binding positions include 256 to 258 (RSE) and Val-272. Glu-279 provides a ligand contact to L-serine. 345-348 (ETHS) is a binding site for ATP. Position 380 (Thr-380) interacts with L-serine.

The protein belongs to the class-II aminoacyl-tRNA synthetase family. Type-1 seryl-tRNA synthetase subfamily. Homodimer. A single tRNA molecule binds across the dimer.

It is found in the cytoplasm. The enzyme catalyses tRNA(Ser) + L-serine + ATP = L-seryl-tRNA(Ser) + AMP + diphosphate + H(+). It catalyses the reaction tRNA(Sec) + L-serine + ATP = L-seryl-tRNA(Sec) + AMP + diphosphate + H(+). It functions in the pathway aminoacyl-tRNA biosynthesis; selenocysteinyl-tRNA(Sec) biosynthesis; L-seryl-tRNA(Sec) from L-serine and tRNA(Sec): step 1/1. Functionally, catalyzes the attachment of serine to tRNA(Ser). Is also probably able to aminoacylate tRNA(Sec) with serine, to form the misacylated tRNA L-seryl-tRNA(Sec), which will be further converted into selenocysteinyl-tRNA(Sec). This Thermus thermophilus (strain ATCC BAA-163 / DSM 7039 / HB27) protein is Serine--tRNA ligase (serS).